A 308-amino-acid polypeptide reads, in one-letter code: Ribonuclease HIII (308 aa).

The region spanning 92 to 308 is the RNase H type-2 domain; it reads DNHIGSDEAG…ANTQKAQKLL (217 aa). The a divalent metal cation site is built by aspartate 98, glutamate 99, and aspartate 204.

Belongs to the RNase HII family. RnhC subfamily. Requires Mn(2+) as cofactor. It depends on Mg(2+) as a cofactor.

It is found in the cytoplasm. It carries out the reaction Endonucleolytic cleavage to 5'-phosphomonoester.. Endonuclease that specifically degrades the RNA of RNA-DNA hybrids. The polypeptide is Ribonuclease HIII (Oceanobacillus iheyensis (strain DSM 14371 / CIP 107618 / JCM 11309 / KCTC 3954 / HTE831)).